The primary structure comprises 471 residues: E3 SUMO-protein ligase EGR2 (471 aa).

Positions 127–143 are enriched in low complexity; it reads PASTTASSNVTSASPNP. Residues 127–177 form a disordered region; that stretch reads PASTTASSNVTSASPNPLATGPLGVCTMSQTQPDLDHLYSPPPPPPYSGCA. An N6-acetyllysine; by EP300 modification is found at lysine 246. Disordered regions lie at residues 273 to 301 and 313 to 336; these read GGPS…AAAA and RPIL…RPYP. The span at 280 to 289 shows a compositional bias: gly residues; it reads TGPGASGGSE. C2H2-type zinc fingers lie at residues 335 to 359, 365 to 387, and 393 to 415; these read YPCP…IRIH, FQCR…IRTH, and FACD…TKIH. The disordered stretch occupies residues 406–471; sequence DERKRHTKIH…GPCSSRTRTP (66 aa). Residues 410–420 are compositionally biased toward basic residues; sequence RHTKIHLRQKE. A compositionally biased stretch (low complexity) spans 424–437; it reads SAPSSSVPAASTAS.

The protein belongs to the EGR C2H2-type zinc-finger protein family. Interacts with HCFC1. Interacts with WWP2. Interacts with UBC9. Interacts with CITED1. Interacts (via phosphorylated form) with SFN. Ubiquitinated by WWP2 leading to proteasomal degradation. In terms of processing, acetylated at Lys-246. May be deacetylated by HDAC6, HDAC10 or SIRT1.

It localises to the nucleus. It functions in the pathway protein modification; protein sumoylation. Sequence-specific DNA-binding transcription factor. Plays a role in hindbrain segmentation by regulating the expression of a subset of homeobox containing genes and in Schwann cell myelination by regulating the expression of genes involved in the formation and maintenance of myelin. Binds to two EGR2-consensus sites EGR2A (5'-CTGTAGGAG-3') and EGR2B (5'-ATGTAGGTG-3') in the HOXB3 enhancer and promotes HOXB3 transcriptional activation. Binds to specific DNA sites located in the promoter region of HOXA4, HOXB2 and ERBB2. Regulates hindbrain segmentation by controlling the expression of Hox genes, such as HOXA4, HOXB3 and HOXB2, and thereby specifying odd and even rhombomeres. Promotes the expression of HOXB3 in the rhombomere r5 in the hindbrain. Regulates myelination in the peripheral nervous system after birth, possibly by regulating the expression of myelin proteins, such as MPZ, and by promoting the differentiation of Schwann cells. Involved in the development of the jaw openener musculature, probably by playing a role in its innervation through trigeminal motor neurons. May play a role in adipogenesis, possibly by regulating the expression of CEBPB. Its function is as follows. E3 SUMO-protein ligase helping SUMO1 conjugation to its coregulators NAB1 and NAB2, whose sumoylation down-regulates EGR2 transcriptional activity. The polypeptide is E3 SUMO-protein ligase EGR2 (EGR2) (Sus scrofa (Pig)).